The sequence spans 672 residues: Zinc finger protein 271 (672 aa).

The interval 1-29 (MEIQFNYESQEHHLLSDGENKTKIGKPAS) is disordered. Positions 9–22 (SQEHHLLSDGENKT) are enriched in basic and acidic residues. The C2H2-type 1; degenerate zinc-finger motif lies at 80-102 (HNCDEYGQSFVWNTGLFRHRKTH). C2H2-type zinc fingers lie at residues 107-129 (YECD…QRIH), 135-157 (YSCN…QRVH), 163-185 (YKCD…QRIH), 191-213 (YQCS…QRIH), 219-241 (YTCN…QRIH), 247-269 (YKCD…QRIH), 275-297 (YPCN…RRIH), 303-325 (YKCN…QRIH), 331-353 (YPCD…QRIH), 359-381 (YPCN…HRIH), 387-409 (YECD…QRIH), 415-437 (YPCS…QRIH), 443-465 (YACN…QRVH), 471-493 (YHCN…QRIH), 499-521 (YLCT…QRIH), 527-549 (YKCS…QRIH), 555-577 (NPCN…QKIH), 583-605 (YKCD…QKIH), and 611-633 (YRCV…EEVH).

This sequence belongs to the krueppel C2H2-type zinc-finger protein family.

It is found in the nucleus. Its function is as follows. May be involved in transcriptional regulation. The protein is Zinc finger protein 271 (ZNF271) of Pongo abelii (Sumatran orangutan).